The following is a 142-amino-acid chain: Large ribosomal subunit protein uL13 (142 aa).

It belongs to the universal ribosomal protein uL13 family. Part of the 50S ribosomal subunit.

In terms of biological role, this protein is one of the early assembly proteins of the 50S ribosomal subunit, although it is not seen to bind rRNA by itself. It is important during the early stages of 50S assembly. The sequence is that of Large ribosomal subunit protein uL13 from Cupriavidus necator (strain ATCC 17699 / DSM 428 / KCTC 22496 / NCIMB 10442 / H16 / Stanier 337) (Ralstonia eutropha).